Reading from the N-terminus, the 655-residue chain is Putative phagocytic receptor 1c (655 aa).

The signal sequence occupies residues 1-20; it reads MLNIIVVLLLLFFSNNVIDS. A compositionally biased stretch (low complexity) spans 146-173; that stretch reads SNSKSSEITSPPSSPSSSSSSSSSPSSS. A disordered region spans residues 146-185; that stretch reads SNSKSSEITSPPSSPSSSSSSSSSPSSSIEEEDDDDTEND. The segment covering 174–183 has biased composition (acidic residues); that stretch reads IEEEDDDDTE. Helical transmembrane passes span 300–320, 359–379, 387–407, 428–448, 461–481, 518–538, 550–570, 587–607, and 619–639; these read IDII…AIIL, FSII…LMVF, IATP…TGIF, SVIT…IGYF, IGTV…CSLL, MILG…FFLS, LSFA…NMII, LLGP…FGIT, and FMFS…IGFL.

It belongs to the nonaspanin (TM9SF) (TC 9.A.2) family.

The protein localises to the membrane. This Dictyostelium discoideum (Social amoeba) protein is Putative phagocytic receptor 1c (phg1c).